A 116-amino-acid polypeptide reads, in one-letter code: Large ribosomal subunit protein bL17 (116 aa).

It belongs to the bacterial ribosomal protein bL17 family. As to quaternary structure, part of the 50S ribosomal subunit. Contacts protein L32.

This Prochlorococcus marinus (strain SARG / CCMP1375 / SS120) protein is Large ribosomal subunit protein bL17.